A 297-amino-acid polypeptide reads, in one-letter code: Protein CANDIDATE G-PROTEIN COUPLED RECEPTOR 8 (297 aa).

An N-linked (GlcNAc...) asparagine glycan is attached at asparagine 20. The next 7 membrane-spanning stretches (helical) occupy residues 34–54, 70–90, 107–127, 142–162, 180–200, 215–235, and 242–262; these read GFLH…YLAY, IMIA…AWCC, LTLF…AFLF, FLIS…FLFG, WGLW…VFLM, FYNY…ASAF, and FGFW…LPLL.

The protein belongs to the UPF0359 family.

It is found in the membrane. G-protein coupled receptor. Plays a role in plants and microbes interactions. The protein is Protein CANDIDATE G-PROTEIN COUPLED RECEPTOR 8 of Arabidopsis thaliana (Mouse-ear cress).